We begin with the raw amino-acid sequence, 322 residues long: Ubiquitin-conjugating enzyme E2 U (322 aa).

Residues 4–153 (RAYLLLQRDF…LKLFNRPLQM (150 aa)) form the UBC core domain. Cys89 functions as the Glycyl thioester intermediate in the catalytic mechanism.

It belongs to the ubiquitin-conjugating enzyme family. Post-translationally, autoubiquitinated in vitro in the presence of UBR5.

The enzyme catalyses S-ubiquitinyl-[E1 ubiquitin-activating enzyme]-L-cysteine + [E2 ubiquitin-conjugating enzyme]-L-cysteine = [E1 ubiquitin-activating enzyme]-L-cysteine + S-ubiquitinyl-[E2 ubiquitin-conjugating enzyme]-L-cysteine.. It functions in the pathway protein modification; protein ubiquitination. Its function is as follows. Catalyzes the covalent attachment of ubiquitin to other proteins. This chain is Ubiquitin-conjugating enzyme E2 U (UBE2U), found in Macaca fascicularis (Crab-eating macaque).